The chain runs to 548 residues: Thermostable neutral protease NprT (548 aa).

The first 25 residues, 1 to 25, serve as a signal peptide directing secretion; it reads MNKRAMLGAIGLAFGLLAAPIGASA. Positions 26-229 are cleaved as a propeptide — activation peptide; sequence KGESIVWNEQ…DSRQPGGGQP (204 aa). Positions 289, 291, 293, and 370 each coordinate Ca(2+). Histidine 374 serves as a coordination point for Zn(2+). Residue glutamate 375 is part of the active site. Residues histidine 378 and glutamate 398 each contribute to the Zn(2+) site. Positions 409, 415, 417, 419, 422, 425, 426, 429, and 432 each coordinate Ca(2+). Residue histidine 463 is the Proton donor of the active site.

The protein belongs to the peptidase M4 family. The cofactor is Ca(2+). It depends on Zn(2+) as a cofactor.

Its subcellular location is the secreted. Its activity is regulated as follows. Its casein hydrolytic activity is inhibited almost completely by a chelating agent (EDTA), whereas neither diisopropyl fluorophosphate nor phenylmethylsulfonyl fluoride inhibit the proteolytic activity in vitro. Extracellular zinc metalloprotease. This chain is Thermostable neutral protease NprT (nprT), found in Geobacillus stearothermophilus (Bacillus stearothermophilus).